Here is a 432-residue protein sequence, read N- to C-terminus: Glutamyl-tRNA reductase (432 aa).

Substrate contacts are provided by residues 49 to 52 (TCNR), Ser-109, 114 to 116 (EGQ), and Gln-120. The active-site Nucleophile is Cys-50. 189–194 (GAGKMS) provides a ligand contact to NADP(+).

Belongs to the glutamyl-tRNA reductase family. As to quaternary structure, homodimer.

It is found in the plastid. Its subcellular location is the cyanelle. It carries out the reaction (S)-4-amino-5-oxopentanoate + tRNA(Glu) + NADP(+) = L-glutamyl-tRNA(Glu) + NADPH + H(+). It participates in porphyrin-containing compound metabolism; protoporphyrin-IX biosynthesis; 5-aminolevulinate from L-glutamyl-tRNA(Glu): step 1/2. The protein operates within porphyrin-containing compound metabolism; chlorophyll biosynthesis. Its function is as follows. Catalyzes the NADPH-dependent reduction of glutamyl-tRNA(Glu) to glutamate 1-semialdehyde (GSA). This Cyanophora paradoxa protein is Glutamyl-tRNA reductase.